The chain runs to 2388 residues: Spectrin beta chain, non-erythrocytic 2 (2388 aa).

Residue Ser-2 is modified to N-acetylserine. The interval Ser-2 to His-278 is actin-binding. Ser-6 and Ser-31 each carry phosphoserine. Calponin-homology (CH) domains are found at residues Ala-57–Gln-161 and Lys-176–Ser-281. Spectrin repeat units lie at residues Leu-306–Arg-414, Ala-427–Leu-527, Glu-532–Glu-639, Arg-642–Ala-744, Leu-749–Glu-849, and Thr-856–Leu-954. Phosphoserine is present on Ser-959. 11 Spectrin repeats span residues Ile-960–Glu-1063, Arg-1066–Ala-1169, Phe-1174–Ala-1266, Glu-1279–Leu-1379, Arg-1384–Gln-1485, Glu-1489–Glu-1586, Arg-1589–Glu-1692, Leu-1696–Leu-1797, Tyr-1801–Leu-1904, Phe-1910–Gln-2010, and Val-2017–Leu-2078. Ser-1073 is subject to Phosphoserine. Ser-1574 carries the post-translational modification Phosphoserine. The segment covering Glu-2080–Lys-2096 has biased composition (basic and acidic residues). Disordered stretches follow at residues Glu-2080–Leu-2112 and Asp-2124–Thr-2207. Residues Asp-2124 to Val-2163 show a composition bias toward polar residues. 2 positions are modified to phosphoserine: Ser-2169 and Ser-2199. Residues Gln-2218–Ala-2328 form the PH domain. Positions Ala-2333–Lys-2388 are disordered. A Phosphothreonine modification is found at Thr-2354. Ser-2359 is modified (phosphoserine). Over residues Arg-2368–Phe-2381 the composition is skewed to basic and acidic residues.

This sequence belongs to the spectrin family. In terms of tissue distribution, abundantly transcribed in the brain. Neurons are the predominant cell-type to express the gene. Found abundantly in Purkinje cells.

It localises to the cytoplasm. It is found in the cytoskeleton. The protein resides in the cell cortex. Functionally, probably plays an important role in neuronal membrane skeleton. This Rattus norvegicus (Rat) protein is Spectrin beta chain, non-erythrocytic 2 (Sptbn2).